Consider the following 559-residue polypeptide: Membrane protein insertase YidC (559 aa).

6 helical membrane-spanning segments follow: residues 5-25 (IVNL…WQYF), 332-352 (AIDF…MNFF), 355-375 (YVGN…LLMF), 429-449 (LPIL…YVTI), 474-494 (LFGL…WPIL), and 520-540 (FMPL…LIYW).

Belongs to the OXA1/ALB3/YidC family. Type 1 subfamily. Interacts with the Sec translocase complex via SecD. Specifically interacts with transmembrane segments of nascent integral membrane proteins during membrane integration.

The protein resides in the cell inner membrane. Functionally, required for the insertion and/or proper folding and/or complex formation of integral membrane proteins into the membrane. Involved in integration of membrane proteins that insert both dependently and independently of the Sec translocase complex, as well as at least some lipoproteins. Aids folding of multispanning membrane proteins. In Rickettsia bellii (strain OSU 85-389), this protein is Membrane protein insertase YidC.